A 571-amino-acid polypeptide reads, in one-letter code: uncharacterized protein (571 aa).

11 helical membrane-spanning segments follow: residues 5-27 (VILN…GYLV), 34-56 (TFVL…LNIT), 61-79 (IGSL…QGGA), 92-114 (LLAS…AWIF), 161-183 (TVGY…ATIF), 391-408 (FIFF…GLIS), 412-434 (FGIS…FGWI), 455-474 (LGLA…QAIT), 484-506 (FFLG…YYLL), 513-532 (VLLA…AALL), and 547-569 (SYAL…VTII).

It belongs to the AAE transporter (TC 2.A.81) family.

It localises to the cell membrane. This is an uncharacterized protein from Francisella tularensis subsp. tularensis (strain SCHU S4 / Schu 4).